The chain runs to 312 residues: Olfactory receptor 51B6 (312 aa).

At 1–23 (MGLNKSASTFQLTGFPGMEKAHH) the chain is on the extracellular side. A glycan (N-linked (GlcNAc...) asparagine) is linked at asparagine 4. Residues 24-44 (WIFIPLLAAYISILLGNGTLL) form a helical membrane-spanning segment. The Cytoplasmic segment spans residues 45–52 (FLIRNDHN). Residues 53-73 (LHEPMYYFLAMLAATDLGVTL) traverse the membrane as a helical segment. The Extracellular portion of the chain corresponds to 74 to 97 (TTMPTVLGVLWLDHREIGHGACFS). The cysteines at positions 95 and 187 are disulfide-linked. The chain crosses the membrane as a helical span at residues 98 to 118 (QAYFIHTLSVMESGVLLAMAY). The Cytoplasmic segment spans residues 119 to 137 (DCFITIRSPLRYTSILTNT). The chain crosses the membrane as a helical span at residues 138-158 (QVMKIGVRVLTRAGLSIMPIV). The Extracellular portion of the chain corresponds to 159-194 (VRLHWFPYCRSHVLSHAFCLHQDVIKLACADITFNR). The helical transmembrane segment at 195 to 215 (LYPVVVLFAMVLLDFLIIFFS) threads the bilayer. The Cytoplasmic portion of the chain corresponds to 216-235 (YILILKTVMGIGSGGERAKA). A helical transmembrane segment spans residues 236–256 (LNTCVSHICCILVFYVTVVCL). Residues 257–271 (TFIHRFGKHVPHVVH) are Extracellular-facing. Residues 272–292 (ITMSYIHFLFPPFMNPFIYSI) form a helical membrane-spanning segment. Residues 293-312 (KTKQIQSGILRLFSLPHSRA) are Cytoplasmic-facing.

This sequence belongs to the G-protein coupled receptor 1 family.

It is found in the cell membrane. Odorant receptor. The chain is Olfactory receptor 51B6 (OR51B6) from Homo sapiens (Human).